The primary structure comprises 358 residues: MTENFPLPPLLGVDWDHLGFEPLEVNGHVECTFSTTTSCWTEPVFVTNPYLPVHGLAPGLNYGQQIFEGMKAFRNPSGDVQLFRPDQNALRFARSALRVAIPPVPTDLFLRAVNTAVGMNTDFVPPHGTGASLYIRPMAFASSPTVGLFLASQFKFCVYVLPVSPLHGKATQEGASVLVIEDFDRAAPLGTGNVKVGGNYGPVLGLIDEAKKQGFNLTLHLDSLSHSLIDEFSTSGFIGVLNDGEVPTIVVSDSQQVVSSITVDSICELARAFDWHVQKRPISFLEVARFSEVYAAGTAAVLVPVESILRRSTGEHVVYSVEYSSPTSCFSRLSTALRDIQQGLVPDDRSWIKLVTKP.

Arg91 serves as a coordination point for pyridoxal 5'-phosphate. Lys195 acts as the Proton acceptor in catalysis. N6-(pyridoxal phosphate)lysine is present on Lys195. Residue Glu231 coordinates pyridoxal 5'-phosphate.

It belongs to the class-IV pyridoxal-phosphate-dependent aminotransferase family. Pyridoxal 5'-phosphate serves as cofactor.

The enzyme catalyses L-isoleucine + 2-oxoglutarate = (S)-3-methyl-2-oxopentanoate + L-glutamate. It catalyses the reaction L-leucine + 2-oxoglutarate = 4-methyl-2-oxopentanoate + L-glutamate. It carries out the reaction L-valine + 2-oxoglutarate = 3-methyl-2-oxobutanoate + L-glutamate. The protein operates within mycotoxin biosynthesis. Branched-chain amino acid aminotransferase; part of the gene cluster that mediates the biosynthesis of pneumocandins, lipohexapeptides of the echinocandin family that prevent fungal cell wall formation by non-competitive inhibition of beta-1,3-glucan synthase. The 10,12-dimethylmyristoyl side chain is synthesized by the reducing polyketide synthase gloL/GLPKS4. The thioesterase gloN/GLHYD exclusively interacts with gloL/GLPKS4 to maintain turnover of the polyketide side chain. The 10R,12S-dimethylmyristic acid is then transferred to the first thiolation domain of the nonribosomal peptide synthetase gloA/GLNRPS4 by the acyl-AMP ligase gloD/GLligase, followed by its acylation to L-ornithine to trigger elongation of the cyclic hexapeptide. L-ornithine, 4R-hydroxyl-L-proline (generated from L-proline by the dioxygenase gloF/GLOXY2), 3S-hydroxyl-L-homotyrosine (generated by gloG/GLHtyB, gloH/GLHtyA, gloI/GLHtyC, gloJ/GLHtyD and hydroxylated at C-3 by the dioxygenase gloM/GLOXY1), 3R-hydroxyl-L-glutamine (generated from L-glutamine probably by the dioxygenase gloE/GLOXY3) and 3S-hydroxyl-L-proline (generated from L-proline by the dioxygenase gloF/GLOXY2 to yield pneumocandin B0), or 3S-hydroxyl-4S-methyl-L-proline (generated from L-leucine by the dioxygenase gloC/GLOXY4 to yield pneumocandin A0) are sequentially added to the growing chain. The last C domain of gloA/GLNRPS4 is proposed to be responsible for cyclization by condensation to form the peptide bond between L-ornithine and 3S-hydroxyl-4S-methyl-L-proline (for pneumocandin A0) or 3S-hydroxyl-L-proline (for pneumocandin B0). Finally, the subsequent C-4 hydroxylation of 3S-hydroxyl-L-homotyrosine and L-ornithine dihydroxylation at C-4 and C-5 are performed by the cytochrome P450 monooxygenases gloP/GLP450-1 and gloO/GLP450-2, respectively. The chain is Branched-chain amino acid aminotransferase gloG from Glarea lozoyensis (strain ATCC 20868 / MF5171).